We begin with the raw amino-acid sequence, 607 residues long: Albumin (607 aa).

The signal sequence occupies residues 1–18 (MKWVTFVSLLFLFSSAYF). Positions 19–24 (RGVLRR) are excised as a propeptide. Albumin domains lie at 19 to 209 (RGVL…DALK), 210 to 402 (ERIL…QFTP), and 403 to 600 (LVEE…KLVA). Residue histidine 27 participates in Cu cation binding. The residue at position 29 (serine 29) is a Phosphoserine. 2 residues coordinate Ca(2+): glutamate 30 and aspartate 37. An intrachain disulfide couples cysteine 77 to cysteine 86. Residues serine 82 and serine 89 each carry the phosphoserine modification. Histidine 91 serves as a coordination point for Zn(2+). Disulfide bonds link cysteine 99–cysteine 115, cysteine 114–cysteine 125, cysteine 147–cysteine 192, cysteine 191–cysteine 200, cysteine 223–cysteine 269, and cysteine 268–cysteine 276. Threonine 107 carries the phosphothreonine modification. Lysine 228 is modified (N6-succinyllysine). Glutamate 267 contributes to the Ca(2+) binding site. Residues histidine 270 and aspartate 272 each contribute to the Zn(2+) site. Ca(2+) contacts are provided by aspartate 272, glutamate 275, aspartate 278, and aspartate 282. 8 disulfides stabilise this stretch: cysteine 288–cysteine 302, cysteine 301–cysteine 312, cysteine 339–cysteine 384, cysteine 383–cysteine 392, cysteine 415–cysteine 461, cysteine 460–cysteine 471, cysteine 484–cysteine 500, and cysteine 499–cysteine 510. Phosphoserine is present on serine 442. Phosphothreonine occurs at positions 443 and 445. Phosphoserine is present on serine 512. Intrachain disulfides connect cysteine 537–cysteine 582 and cysteine 581–cysteine 590. Position 557 is an N6-methyllysine (lysine 557). Phosphothreonine is present on threonine 569. Lysine 587 is subject to N6-succinyllysine.

The protein belongs to the ALB/AFP/VDB family. In terms of assembly, interacts with FCGRT; this interaction regulates ALB homeostasis. Interacts with TASOR. In plasma, occurs in a covalently-linked complex with chromophore-bound alpha-1-microglobulin; this interaction does not prevent fatty acid binding to ALB. In terms of processing, phosphorylated by FAM20C in the extracellular medium. As to expression, plasma.

The protein resides in the secreted. Binds water, Ca(2+), Na(+), K(+), fatty acids, hormones, bilirubin and drugs. Its main function is the regulation of the colloidal osmotic pressure of blood. Major zinc transporter in plasma, typically binds about 80% of all plasma zinc. Major calcium and magnesium transporter in plasma, binds approximately 45% of circulating calcium and magnesium in plasma. Potentially has more than two calcium-binding sites and might additionally bind calcium in a non-specific manner. The shared binding site between zinc and calcium at residue Asp-272 suggests a crosstalk between zinc and calcium transport in the blood. The rank order of affinity is zinc &gt; calcium &gt; magnesium. Binds to the bacterial siderophore enterobactin and inhibits enterobactin-mediated iron uptake of E.coli from ferric transferrin, and may thereby limit the utilization of iron and growth of enteric bacteria such as E.coli. Does not prevent iron uptake by the bacterial siderophore aerobactin. The chain is Albumin (ALB) from Equus asinus (Donkey).